An 83-amino-acid chain; its full sequence is Putative membrane protein insertion efficiency factor (83 aa).

The interval 63 to 83 (GGNDPVPDHFSLRRNKTDISD) is disordered. Basic and acidic residues predominate over residues 68–83 (VPDHFSLRRNKTDISD).

It belongs to the UPF0161 family.

Its subcellular location is the cell membrane. Functionally, could be involved in insertion of integral membrane proteins into the membrane. The sequence is that of Putative membrane protein insertion efficiency factor from Streptococcus agalactiae serotype III (strain NEM316).